Reading from the N-terminus, the 199-residue chain is Imidazoleglycerol-phosphate dehydratase (199 aa).

It belongs to the imidazoleglycerol-phosphate dehydratase family.

The protein resides in the cytoplasm. The enzyme catalyses D-erythro-1-(imidazol-4-yl)glycerol 3-phosphate = 3-(imidazol-4-yl)-2-oxopropyl phosphate + H2O. Its pathway is amino-acid biosynthesis; L-histidine biosynthesis; L-histidine from 5-phospho-alpha-D-ribose 1-diphosphate: step 6/9. The chain is Imidazoleglycerol-phosphate dehydratase from Acidithiobacillus ferrooxidans (strain ATCC 53993 / BNL-5-31) (Leptospirillum ferrooxidans (ATCC 53993)).